A 201-amino-acid chain; its full sequence is AVYTLPELPYDYSALEPYISGEIMELHHDKHHKAYVDGANTALDKLAEARDKADFGAINKLEKDLAFNLAGHVNHSVFWKNMAPKGSAPERPTDELGAAIDEFFGSFDNMKAQFTAAATGIQGSGWASLVWDPLGKRINTLQFYDHQNNLPAGSIPLLQLDMWEHAFYLQYKNVKGDYVKSWWNVVNWDDVALRFSEARVA.

Fe(3+)-binding residues include His-27, His-75, Asp-161, and His-165. Mn(2+)-binding residues include His-27, His-75, Asp-161, and His-165.

Belongs to the iron/manganese superoxide dismutase family. In terms of assembly, homotetramer. Mn(2+) is required as a cofactor. Fe(3+) serves as cofactor.

The catalysed reaction is 2 superoxide + 2 H(+) = H2O2 + O2. With respect to regulation, shows decreasing activity with increasing pH. Slightly inhibited by azide and fluoride at pH 7-8; the inhibition is drastically increased towards lower pH. In terms of biological role, destroys superoxide anion radicals which are normally produced within the cells and which are toxic to biological systems. Catalyzes the dismutation of superoxide anion radicals into O2 and H2O2 by successive reduction and oxidation of the transition metal ion at the active site. In Propionibacterium freudenreichii subsp. shermanii, this protein is Superoxide dismutase [Mn/Fe] (sodA).